The primary structure comprises 1555 residues: Pre-mRNA cleavage complex 2 protein Pcf11 (1555 aa).

At Ser2 the chain carries N-acetylserine. One can recognise a CID domain in the interval 14 to 142 (AREDACRDYQ…ALDVRVNSLD (129 aa)). Phosphoserine; by WNK1 is present on Ser120. Residue Thr121 is modified to Phosphothreonine; by WNK1. A disordered region spans residues 167–186 (NKSPEEPSTPGTVVSSPSIS). A phosphoserine mark is found at Ser169 and Ser182. The segment covering 174 to 186 (STPGTVVSSPSIS) has biased composition (low complexity). The stretch at 202–239 (QLIRQQLLAKQKQLLELQQKKLELELEQAKAQLAVSLS) forms a coiled coil. A disordered region spans residues 266–648 (VKAPHQVPVQ…QQQHRLSVDA (383 aa)). Lys291 participates in a covalent cross-link: Glycyl lysine isopeptide (Lys-Gly) (interchain with G-Cter in SUMO2). Positions 307–317 (HGKDQSHRKEF) are enriched in basic and acidic residues. Polar residues predominate over residues 320–333 (NTLNQSDTKTSKTI). A Glycyl lysine isopeptide (Lys-Gly) (interchain with G-Cter in SUMO2) cross-link involves residue Lys328. Basic and acidic residues-rich tracts occupy residues 342–364 (KQEK…DSKS), 380–421 (HTKD…DVKE), and 427–442 (EKKD…EHRL). Residue Lys456 forms a Glycyl lysine isopeptide (Lys-Gly) (interchain with G-Cter in SUMO2) linkage. Phosphothreonine is present on Thr459. A compositionally biased stretch (basic residues) spans 475 to 486 (STRKRSRSRSPK). Residues Ser489, Ser494, Ser509, and Ser511 each carry the phosphoserine modification. The segment covering 494–508 (SPKRRDRRSPKRRQR) has biased composition (basic residues). Positions 529–567 (SHMEEFTPPSREDRNAKRSTKQDIRDPRRMKKTEEERPQ) are enriched in basic and acidic residues. Over residues 568-578 (ETTNQHSTKSG) the composition is skewed to polar residues. Positions 599 to 615 (SGWEENKSLQQVDEHSK) are enriched in basic and acidic residues. Ser645 bears the Phosphoserine mark. Residue Lys654 forms a Glycyl lysine isopeptide (Lys-Gly) (interchain with G-Cter in SUMO2) linkage. Ser705 bears the Phosphoserine mark. Disordered regions lie at residues 707–732 (FNDR…PASR) and 749–781 (RPLF…PRID). The span at 716-725 (PRYEDSDKPF) shows a compositional bias: basic and acidic residues. Lys723 is covalently cross-linked (Glycyl lysine isopeptide (Lys-Gly) (interchain with G-Cter in SUMO2)). Phosphoserine occurs at positions 728 and 777. A Phosphothreonine modification is found at Thr785. Ser794 is subject to Phosphoserine. 3 positions are modified to asymmetric dimethylarginine: Arg805, Arg820, and Arg833. Ser851 is subject to Phosphoserine. Asymmetric dimethylarginine is present on residues Arg929, Arg942, Arg955, Arg981, Arg994, and Arg1007. Positions 1056 to 1081 (HGQPGPRFERTPGQPGPQRFDGPPGQ) are disordered. Residues Arg1093 and Arg1104 each carry the asymmetric dimethylarginine modification. Disordered stretches follow at residues 1127–1147 (VSFN…NAPS) and 1159–1187 (FDSP…RASG). Ser1161 is modified (phosphoserine). Residues 1162–1175 (PQGPNFNGPHGPGN) are compositionally biased toward low complexity. A Glycyl lysine isopeptide (Lys-Gly) (interchain with G-Cter in SUMO2) cross-link involves residue Lys1278. The span at 1289 to 1298 (SATTQVSEVT) shows a compositional bias: polar residues. The segment at 1289 to 1315 (SATTQVSEVTAQPPPEEEEDQNEDQDV) is disordered. A compositionally biased stretch (acidic residues) spans 1303–1315 (PEEEEDQNEDQDV). Residues Lys1419, Lys1511, and Lys1524 each participate in a glycyl lysine isopeptide (Lys-Gly) (interchain with G-Cter in SUMO2) cross-link. The disordered stretch occupies residues 1516-1555 (EPCDSPKVKEERIDTPPACTEESIATPSEIKTENDTVESV). Positions 1519-1529 (DSPKVKEERID) are enriched in basic and acidic residues. Phosphothreonine is present on Thr1530. Residue Lys1546 forms a Glycyl lysine isopeptide (Lys-Gly) (interchain with G-Cter in SUMO2) linkage.

As to quaternary structure, associates with the phosphorylated CTD domain of POLR2A /RNA polymerase II. Phosphorylation at Ser-120 and/or Thr-121 by WNK1 weakens its association with POLR2A/RNA polymerase II, promoting transcript release from the chromatin template and mRNA export to the cytoplasm.

Its subcellular location is the nucleus. Its function is as follows. Component of pre-mRNA cleavage complex II, which promotes transcription termination by RNA polymerase II. This Homo sapiens (Human) protein is Pre-mRNA cleavage complex 2 protein Pcf11.